The following is a 178-amino-acid chain: Large ribosomal subunit protein uL6 (178 aa).

Belongs to the universal ribosomal protein uL6 family. As to quaternary structure, part of the 50S ribosomal subunit.

This protein binds to the 23S rRNA, and is important in its secondary structure. It is located near the subunit interface in the base of the L7/L12 stalk, and near the tRNA binding site of the peptidyltransferase center. The polypeptide is Large ribosomal subunit protein uL6 (Tropheryma whipplei (strain TW08/27) (Whipple's bacillus)).